A 334-amino-acid polypeptide reads, in one-letter code: uncharacterized protein (334 aa).

A substrate-binding site is contributed by Ser-126. Residue Tyr-151 is the Proton acceptor of the active site.

It belongs to the NAD(P)-dependent epimerase/dehydratase family. dTDP-glucose dehydratase subfamily.

This is an uncharacterized protein from Escherichia coli O111:H-.